A 131-amino-acid polypeptide reads, in one-letter code: Small ribosomal subunit protein bS6 (131 aa).

The disordered stretch occupies residues 92 to 131 (RVDEHKDGPSVQMQKRDERERGDRGDRGERRERRDRDDRN).

The protein belongs to the bacterial ribosomal protein bS6 family.

Functionally, binds together with bS18 to 16S ribosomal RNA. This chain is Small ribosomal subunit protein bS6, found in Paracoccus denitrificans (strain Pd 1222).